We begin with the raw amino-acid sequence, 39 residues long: Pro-opiomelanocortin (39 aa).

Position 13 is a valine amide (Val13).

Belongs to the POMC family.

It localises to the secreted. Precursor protein for pituitary hormones that regulate stress and environmental adaptation. Functionally, stimulates the adrenal glands to release cortisol. Its function is as follows. Anorexigenic peptide. Increases the pigmentation of skin by increasing melanin production in melanocytes. The chain is Pro-opiomelanocortin (POMC) from Struthio camelus (Common ostrich).